A 671-amino-acid polypeptide reads, in one-letter code: cGMP-dependent protein kinase 1 (671 aa).

An N-acetylserine modification is found at S2. The stretch at 2 to 59 forms a coiled coil; it reads SELEEDFAKILMLKEERIKELEKRLSEKEEEIQELKRKLHKCQSVLPVPSTHIGPRTT. The tract at residues 2-102 is required for dimerization; sequence SELEEDFAKI…LIKEAILDND (101 aa). Positions 9–44 are leucine-zipper; sequence AKILMLKEERIKELEKRLSEKEEEIQELKRKLHKCQ. Residues 50-75 form an autoinhibitory domain region; sequence PSTHIGPRTTRAQGISAEPQTYRSFH. The residue at position 59 (T59) is a Phosphothreonine; by autocatalysis. Residues 103–220 form a cGMP-binding, high affinity region; sequence FMKNLELSQI…EYMEFLKSVP (118 aa). 3',5'-cyclic GMP contacts are provided by residues 167–170, 177–178, R282, 291–294, 301–302, and Y336; these read GELA, RT, and GEKA. Residues 221 to 341 form a cGMP-binding, low affinity region; it reads TFQSLPDEIL…SNKAYEDAEA (121 aa). Residues 360–619 form the Protein kinase domain; the sequence is FNIIDTLGVG…VKDIQKHKWF (260 aa). Residues 366-374 and K390 each bind ATP; that span reads LGVGGFGRV. Residue D484 is the Proton acceptor of the active site. T515 carries the phosphothreonine modification. Residues 620–671 enclose the AGC-kinase C-terminal domain; the sequence is EGFNWEGLRKGTLTPPIIPSVASPTDTSNFDSFPEDSDEPPPDDNSGWDIDF. The segment at 635–671 is disordered; sequence PIIPSVASPTDTSNFDSFPEDSDEPPPDDNSGWDIDF. Residues 652–661 show a composition bias toward acidic residues; the sequence is FPEDSDEPPP.

It belongs to the protein kinase superfamily. AGC Ser/Thr protein kinase family. cGMP subfamily. In terms of assembly, isoform alpha: parallel homodimer or heterodimer and also heterotetramer. Interacts directly with PPP1R12A. Non-covalent dimer of dimer of PRKG1-PRKG1 and PPP1R12A-PPP1R12A. This interaction targets PRKG1 to stress fibers to mediate smooth muscle cell relaxation and vasodilation in responses to rises in cGMP. Isoform beta: antiparallel homodimer. Part of cGMP kinase signaling complex at least composed of ACTA2/alpha-actin, CNN1/calponin H1, PLN/phospholamban, PRKG1 and ITPR1. Interacts with IRAG1. Forms a stable complex with ITPR1, IRAG1, and isoform beta of PRKG1. Interacts with TRPC7 (via ankyrin repeat domain). Isoform alpha interacts with RGS2. Interacts with GTF2I. Autophosphorylation increases kinase activity. In terms of processing, 65 kDa monomer is produced by proteolytic cleavage. As to expression, detected in cerebellum, hippocampus, dorsomedial hypothalamus, medulla, subcommissural organ, cerebral cortex, amygdala, habenulae, various hypothalamic regions, olfactory bulb, pituitary gland, and retina. Isoform alpha is prominent in the cerebellum and medulla, whereas isoform Beta is predominant in the cortex, hippocampus, hypothalamus, and olfactory bulb.

The protein resides in the cytoplasm. The catalysed reaction is L-seryl-[protein] + ATP = O-phospho-L-seryl-[protein] + ADP + H(+). The enzyme catalyses L-threonyl-[protein] + ATP = O-phospho-L-threonyl-[protein] + ADP + H(+). In the absence of cGMP, PRKG1 activity is suppressed by autoinhibitory contacts. Its function is as follows. Serine/threonine protein kinase that acts as a key mediator of the nitric oxide (NO)/cGMP signaling pathway. GMP binding activates PRKG1, which phosphorylates serines and threonines on many cellular proteins. Numerous protein targets for PRKG1 phosphorylation are implicated in modulating cellular calcium, but the contribution of each of these targets may vary substantially among cell types. Proteins that are phosphorylated by PRKG1 regulate platelet activation and adhesion, smooth muscle contraction, cardiac function, gene expression, feedback of the NO-signaling pathway, and other processes involved in several aspects of the CNS like axon guidance, hippocampal and cerebellar learning, circadian rhythm and nociception. Smooth muscle relaxation is mediated through lowering of intracellular free calcium, by desensitization of contractile proteins to calcium, and by decrease in the contractile state of smooth muscle or in platelet activation. Regulates intracellular calcium levels via several pathways: phosphorylates IRAG1 and inhibits IP3-induced Ca(2+) release from intracellular stores, phosphorylation of KCNMA1 (BKCa) channels decreases intracellular Ca(2+) levels, which leads to increased opening of this channel. PRKG1 phosphorylates the canonical transient receptor potential channel (TRPC) family which inactivates the associated inward calcium current. Another mode of action of NO/cGMP/PKGI signaling involves PKGI-mediated inactivation of the Ras homolog gene family member A (RhoA). Phosphorylation of RHOA by PRKG1 blocks the action of this protein in myriad processes: regulation of RHOA translocation; decreasing contraction; controlling vesicle trafficking, reduction of myosin light chain phosphorylation resulting in vasorelaxation. Activation of PRKG1 by NO signaling also alters gene expression in a number of tissues. In smooth muscle cells, increased cGMP and PRKG1 activity influence expression of smooth muscle-specific contractile proteins, levels of proteins in the NO/cGMP signaling pathway, down-regulation of the matrix proteins osteopontin and thrombospondin-1 to limit smooth muscle cell migration and phenotype. Regulates vasodilator-stimulated phosphoprotein (VASP) functions in platelets and smooth muscle. The chain is cGMP-dependent protein kinase 1 (Prkg1) from Mus musculus (Mouse).